The primary structure comprises 256 residues: Pimeloyl-[acyl-carrier protein] methyl ester esterase (256 aa).

An AB hydrolase-1 domain is found at H15–P242. Substrate is bound by residues W22, S82–L83, and F143–Q147. The active-site Nucleophile is S82. Catalysis depends on residues D207 and H235. H235 provides a ligand contact to substrate.

Belongs to the AB hydrolase superfamily. Carboxylesterase BioH family. Monomer.

The protein localises to the cytoplasm. It catalyses the reaction 6-carboxyhexanoyl-[ACP] methyl ester + H2O = 6-carboxyhexanoyl-[ACP] + methanol + H(+). It participates in cofactor biosynthesis; biotin biosynthesis. Functionally, the physiological role of BioH is to remove the methyl group introduced by BioC when the pimeloyl moiety is complete. It allows to synthesize pimeloyl-ACP via the fatty acid synthetic pathway through the hydrolysis of the ester bonds of pimeloyl-ACP esters. The protein is Pimeloyl-[acyl-carrier protein] methyl ester esterase of Escherichia coli O157:H7.